The following is a 335-amino-acid chain: Transcriptional activator NphR (335 aa).

In terms of domain architecture, HTH araC/xylS-type spans 231 to 329 (TRVQRVIEQN…GSSPGLYRKE (99 aa)). 2 consecutive DNA-binding regions (H-T-H motif) follow at residues 249–270 (SDIA…NAEG) and 296–319 (VADV…RSTF).

Its function is as follows. Transcriptional activator of nphA1 and nphA2 involved in the degradation of 4-nitrophenol (4-NP). The protein is Transcriptional activator NphR (nphR) of Rhodococcus sp.